A 413-amino-acid polypeptide reads, in one-letter code: MKGSNTFRWAIAIGVVVAAAAFWFWHSRSESPTAAPGVAAQAQHTAAAGRRGMRDGPLAPVQAATATTQAVPRYLSGLGTVTAANTVTVRSRVDGQLIALHFQEGQQVNAGDLLAQIDPSQFKVALAQAQGQLAKDNATLANARRDLARYQQLAKTNLVSRQELDAQQALVNETQGTIKADEANVASAQLQLDWSRITAPVSGRVGLKQVDVGNQISSSDTAGIVVITQTHPIDLIFTLPESDIATVVQAQKAGKTLVVEAWDRTNSHKLSEGVLLSLDNQIDPTTGTIKIKARFTNQDDTLFPNQFVNARMLVDTEQNAVVVPAAAVQMGNEGHFVWVLNDENNVSKKRVKIGIQDNRNVVISAGLSAGDRVVTDGIDRLTEGAKVEVVEPQTTMADEKSPSRHEGQKGARA.

The N-terminal stretch at 1–20 (MKGSNTFRWAIAIGVVVAAA) is a signal peptide. 2 disordered regions span residues 31–57 (SPTA…RDGP) and 391–413 (EPQT…GARA). A compositionally biased stretch (low complexity) spans 32–49 (PTAAPGVAAQAQHTAAAG). Positions 397–413 (ADEKSPSRHEGQKGARA) are enriched in basic and acidic residues.

The protein belongs to the membrane fusion protein (MFP) (TC 8.A.1) family. As to quaternary structure, part of a tripartite efflux system composed of MdtA, MdtB and MdtC.

It is found in the cell inner membrane. The polypeptide is Multidrug resistance protein MdtA (Salmonella typhi).